A 119-amino-acid chain; its full sequence is Large ribosomal subunit protein bL20 (119 aa).

The protein belongs to the bacterial ribosomal protein bL20 family.

In terms of biological role, binds directly to 23S ribosomal RNA and is necessary for the in vitro assembly process of the 50S ribosomal subunit. It is not involved in the protein synthesizing functions of that subunit. This Bradyrhizobium sp. (strain ORS 278) protein is Large ribosomal subunit protein bL20.